Consider the following 397-residue polypeptide: Sulfate adenylyltransferase (397 aa).

The protein belongs to the sulfate adenylyltransferase family.

The enzyme catalyses sulfate + ATP + H(+) = adenosine 5'-phosphosulfate + diphosphate. Its pathway is sulfur metabolism; hydrogen sulfide biosynthesis; sulfite from sulfate: step 1/3. The polypeptide is Sulfate adenylyltransferase (sat) (Allochromatium vinosum (strain ATCC 17899 / DSM 180 / NBRC 103801 / NCIMB 10441 / D) (Chromatium vinosum)).